We begin with the raw amino-acid sequence, 252 residues long: tRNA (guanine-N(1)-)-methyltransferase (252 aa).

Residues G116 and L135–L140 contribute to the S-adenosyl-L-methionine site.

It belongs to the RNA methyltransferase TrmD family. Homodimer.

Its subcellular location is the cytoplasm. The enzyme catalyses guanosine(37) in tRNA + S-adenosyl-L-methionine = N(1)-methylguanosine(37) in tRNA + S-adenosyl-L-homocysteine + H(+). Functionally, specifically methylates guanosine-37 in various tRNAs. This chain is tRNA (guanine-N(1)-)-methyltransferase, found in Limosilactobacillus reuteri (strain DSM 20016) (Lactobacillus reuteri).